The primary structure comprises 331 residues: MPSCRRQGGMALLVVLLILSVMVIIASNMSGRLQLELRRTGNLTAGKQAWWYAMSAEALVSKVLVQDFKDDPNVVNLGQNWARQDAVFPVDDGKLTGRVRDLQSCFNLNSLSVPLKDGISGDDLEKQPYPVKAFRALLKQLEVEDYEAVQLTDAIRDWTDKDTALVSSYGAEDAYYEGLTPPYLTANQWMLSTDELRAVRGVSARLYARLAPYVCALPSDKLLVNINTIKPEQAALLVALYLDKVGLDDAKRVLTSRPQKGWKEKKAMTDQMPAPLSTIPGLDAVLDVKSSYFEARLIAEVGDTRARLESVFVRGKDNKLVMLRRLNGGAE.

The propeptide at 1-9 is leader sequence; it reads MPSCRRQGG. A helical transmembrane segment spans residues 8-27; the sequence is GGMALLVVLLILSVMVIIAS. Over 28–331 the chain is Periplasmic; sequence NMSGRLQLEL…MLRRLNGGAE (304 aa).

This sequence belongs to the GSP K family. As to quaternary structure, type II secretion is composed of four main components: the outer membrane complex, the inner membrane complex, the cytoplasmic secretion ATPase and the periplasm-spanning pseudopilus. Interacts with core component ExeG. Cleaved by prepilin peptidase.

Its subcellular location is the cell inner membrane. In terms of biological role, component of the type II secretion system required for the energy-dependent secretion of extracellular factors such as proteases and toxins from the periplasm. Plays a role in pseudopilus assembly and seems to control its length. Interacts with the pseudopilus tip complex that is critical for the recognition and binding of secretion substrates. In Aeromonas hydrophila, this protein is Type II secretion system protein K (exeK).